The sequence spans 167 residues: Ureidoglycolate lyase (167 aa).

This sequence belongs to the ureidoglycolate lyase family. As to quaternary structure, homodimer. It depends on Ni(2+) as a cofactor.

The enzyme catalyses (S)-ureidoglycolate = urea + glyoxylate. The protein operates within nitrogen metabolism; (S)-allantoin degradation. Its function is as follows. Catalyzes the catabolism of the allantoin degradation intermediate (S)-ureidoglycolate, generating urea and glyoxylate. Involved in the utilization of allantoin as nitrogen source. In Pseudomonas fluorescens (strain ATCC BAA-477 / NRRL B-23932 / Pf-5), this protein is Ureidoglycolate lyase.